Reading from the N-terminus, the 452-residue chain is MNNLNQTIVAPTTNISTQAISLIRISGDDSFNIINKLLKTKIKEEKNVWVRKMFDGQELVDEVVITSFVSPASFTGENVVEIACHGGILNTQRIINLIIKNGARMANKGEFSQRAFLNNKIDLIQAEGINDLIFAKNELALKIGVNNMSGAHNQSIINLKGNLLDIISRIQVSIDYPDYDDVEGSSIPELAKALSGINEEVNNLLKRSKMAIKNTNGIKTAIVGKTNVGKSSLLNALLNEDKAIVTDIHGTTRDIVTGEINLENISLNLIDTAGIRETTDIVEGLGIEKSLKIIDEAELVLFVVDFKSINDEENKMIFDKLENKNYILVFNKSEFINDIERNKIKDLHNNFVYTSAINNDIDNLIMKIEQMHINEEIINNDSLILINLQQITLVEQVKDRLEKSLNAIIGGMPIDIVNVDLHEAWDYLNQLIGEQYDEEIIDNIFKKYCLGK.

R24, E81, and K120 together coordinate (6S)-5-formyl-5,6,7,8-tetrahydrofolate. In terms of domain architecture, TrmE-type G spans 217-373; that stretch reads GIKTAIVGKT…LIMKIEQMHI (157 aa). N227 contacts K(+). GTP contacts are provided by residues 227–232, 246–252, and 271–274; these read NVGKSS, TDIHGTT, and DTAG. A Mg(2+)-binding site is contributed by S231. Residues T246, I248, and T251 each contribute to the K(+) site. T252 is a binding site for Mg(2+). K452 contributes to the (6S)-5-formyl-5,6,7,8-tetrahydrofolate binding site.

Belongs to the TRAFAC class TrmE-Era-EngA-EngB-Septin-like GTPase superfamily. TrmE GTPase family. Homodimer. Heterotetramer of two MnmE and two MnmG subunits. The cofactor is K(+).

It is found in the cytoplasm. Functionally, exhibits a very high intrinsic GTPase hydrolysis rate. Involved in the addition of a carboxymethylaminomethyl (cmnm) group at the wobble position (U34) of certain tRNAs, forming tRNA-cmnm(5)s(2)U34. The sequence is that of tRNA modification GTPase MnmE from Mesoplasma florum (strain ATCC 33453 / NBRC 100688 / NCTC 11704 / L1) (Acholeplasma florum).